The following is a 70-amino-acid chain: DNA gyrase inhibitor YacG (70 aa).

Zn(2+)-binding residues include C20, C23, C35, and C39.

Belongs to the DNA gyrase inhibitor YacG family. In terms of assembly, interacts with GyrB. It depends on Zn(2+) as a cofactor.

Functionally, inhibits all the catalytic activities of DNA gyrase by preventing its interaction with DNA. Acts by binding directly to the C-terminal domain of GyrB, which probably disrupts DNA binding by the gyrase. The sequence is that of DNA gyrase inhibitor YacG from Rhizobium leguminosarum bv. trifolii (strain WSM2304).